A 361-amino-acid chain; its full sequence is 3-dehydroquinate synthase (361 aa).

The protein belongs to the archaeal-type DHQ synthase family.

It catalyses the reaction 2-amino-2,3,7-trideoxy-D-lyxo-hept-6-ulosonate + NAD(+) + H2O = 3-dehydroquinate + NH4(+) + NADH + H(+). Catalyzes the oxidative deamination and cyclization of 2-amino-3,7-dideoxy-D-threo-hept-6-ulosonic acid (ADH) to yield 3-dehydroquinate (DHQ), which is fed into the canonical shikimic pathway of aromatic amino acid biosynthesis. This is 3-dehydroquinate synthase from Methanococcus vannielii (strain ATCC 35089 / DSM 1224 / JCM 13029 / OCM 148 / SB).